The following is a 486-amino-acid chain: Maintenance of mitochondrial morphology protein 1 (486 aa).

At 1 to 20 (MNFQQSAIPPFSFLLSFTQG) the chain is on the lumenal side. A helical transmembrane segment spans residues 21–41 (FLLGQLSVVLLIGAFIKFFIF). Residues 42 to 486 (GEAPPPPSRG…GSLPDGAVGN (445 aa)) lie on the Cytoplasmic side of the membrane. Disordered stretches follow at residues 70-96 (TNEA…SSST), 271-320 (TPPL…SPKS), and 387-486 (RTGV…AVGN). The span at 83-96 (STSNVLRPVPSSST) shows a compositional bias: polar residues. Residues 128-379 (QPESLDWFNV…EPRVQVVGLP (252 aa)) form the SMP-LTD domain. Over residues 271 to 282 (TPPLHTPSPSPA) the composition is skewed to pro residues. Low complexity predominate over residues 292 to 306 (QSQPENNSSNPNQQS). Composition is skewed to polar residues over residues 398-407 (TGSNAASRSA) and 440-450 (DSVSRSSSFNV). Residues 460-474 (MTREDSRGAISDDFH) are compositionally biased toward basic and acidic residues.

It belongs to the MMM1 family. As to quaternary structure, homodimer. Component of the ER-mitochondria encounter structure (ERMES) or MDM complex, composed of mmm1, mdm10, mdm12 and mdm34. A mmm1 homodimer associates with one molecule of mdm12 on each side in a pairwise head-to-tail manner, and the SMP-LTD domains of mmm1 and mdm12 generate a continuous hydrophobic tunnel for phospholipid trafficking.

Its subcellular location is the endoplasmic reticulum membrane. In terms of biological role, component of the ERMES/MDM complex, which serves as a molecular tether to connect the endoplasmic reticulum (ER) and mitochondria. Components of this complex are involved in the control of mitochondrial shape and protein biogenesis, and function in nonvesicular lipid trafficking between the ER and mitochondria. The mdm12-mmm1 subcomplex functions in the major beta-barrel assembly pathway that is responsible for biogenesis of all outer membrane beta-barrel proteins, and acts in a late step after the SAM complex. The mdm10-mdm12-mmm1 subcomplex further acts in the TOM40-specific pathway after the action of the mdm12-mmm1 complex. Essential for establishing and maintaining the structure of mitochondria and maintenance of mtDNA nucleoids. This Aspergillus terreus (strain NIH 2624 / FGSC A1156) protein is Maintenance of mitochondrial morphology protein 1.